Here is a 180-residue protein sequence, read N- to C-terminus: tRNA (cytidine(56)-2'-O)-methyltransferase (180 aa).

S-adenosyl-L-methionine-binding positions include L84 and 112–116 (GAEKV).

Belongs to the aTrm56 family. In terms of assembly, homodimer.

It localises to the cytoplasm. It catalyses the reaction cytidine(56) in tRNA + S-adenosyl-L-methionine = 2'-O-methylcytidine(56) in tRNA + S-adenosyl-L-homocysteine + H(+). Specifically catalyzes the AdoMet-dependent 2'-O-ribose methylation of cytidine at position 56 in tRNAs. The chain is tRNA (cytidine(56)-2'-O)-methyltransferase from Natronomonas pharaonis (strain ATCC 35678 / DSM 2160 / CIP 103997 / JCM 8858 / NBRC 14720 / NCIMB 2260 / Gabara) (Halobacterium pharaonis).